Reading from the N-terminus, the 1316-residue chain is DNA-directed RNA polymerase subunit beta' (1316 aa).

Zn(2+) contacts are provided by C60, C62, C75, and C78. The Mg(2+) site is built by D535, D537, and D539. C891, C968, C975, and C978 together coordinate Zn(2+).

Belongs to the RNA polymerase beta' chain family. As to quaternary structure, the RNAP catalytic core consists of 2 alpha, 1 beta, 1 beta' and 1 omega subunit. When a sigma factor is associated with the core the holoenzyme is formed, which can initiate transcription. It depends on Mg(2+) as a cofactor. Zn(2+) serves as cofactor.

The enzyme catalyses RNA(n) + a ribonucleoside 5'-triphosphate = RNA(n+1) + diphosphate. DNA-dependent RNA polymerase catalyzes the transcription of DNA into RNA using the four ribonucleoside triphosphates as substrates. The protein is DNA-directed RNA polymerase subunit beta' of Mycobacterium ulcerans (strain Agy99).